The primary structure comprises 140 residues: UPF0134 protein MPN_130 (140 aa).

Belongs to the UPF0134 family.

In Mycoplasma pneumoniae (strain ATCC 29342 / M129 / Subtype 1) (Mycoplasmoides pneumoniae), this protein is UPF0134 protein MPN_130.